The chain runs to 3630 residues: MNKIYKVIWNATLLAWVAVSELAKGKTKSTTSKSKAKSLSSSVIVGGIILTTPLSLIAATVQVGGGTNSGTTATASTNCADLYNYQNPENSGSGAAGNYNAGNPSVCSIAIGENAQGGTSGTGGSPGIAIGGNSKATGGLSVAIGGYAQATNVGSIALGTAALSSGFNSLAISRQAAATNNYSIAIGTTSVSKGVGSIAMGHSTNASGDQSIAIGSSDAVNSATATTTYDGTTNTQASGSKSIAIGASAKASTNNSIALGAGSVTSAQSGNSYLTGVGASATNGVVSVGTSTATRRIQNVADGSAASDAVTVAQLDKAYDDTNGRLAAALGTGSGAAYNAANNTYTAPTNIGGTGKNTIDDAIKATQRSVVAGSNIVVTPTTASDGSISYSVATSATPTFTSITVNNAPTAGTDATNKTYVDSKAAASRTEVAAGSNVSGVVKTTGANGQDVYTVNANGTTASAGSSAVTVTPGTKDANNVTDYKVDLSATTKTDIQKGVDAKNAVDTAGLKFKGDTATTSNTKKLGDTVSITGDTNISTVATTDGVQVKLNPNLDLGATGSVKTGNTTINNAGVTADQVTVGGVVINNTSGINAGGKAITNVAAPTNNTDAANKKYVDDAGTALTNLGFGLKAQDGTTVNKKLGEAVDIVGSNSNISTKVNAGKVEVALSNTLDLGTTGSVTTGSTVINNAGVTATQVTANKVTINNAPTAGTDATNKTYVDSKAAASRTEVAAGSNVSGVVKTTGANGQDIYAVNANGTTASAGSSAVTVTPGTKDANNVTDYKVDLSATTKTDIQKGVDAKNAVDTAGLKFKGDTATTSNTKKLGDTVSITGDTNISTVATTDGVQVKLNPNLDLGATGSVKTGNTTINNAGVTADQVTVGGVVINNTSGINAGGKAITNVAAPTNNTDAANKKYVDDAGTALTNLGFGLKAQDGTTVNKKLGEAVDIVGSNSNISTKVNAGKVEVALSNTLDLGTTGSVTTGSTVINNAGVTATQVTANKVTVNNAPTAGTDATNKTYVDSKAAASRTEVAAGSNVSGVVKTTGANGQDVYTVNANGTTASAGSSAVTVTPGTKDANNVTDYKVDLSATTKTDIQKGVDAKNAVDTAGLKFKGDTATTSNTKKLGDTVSITGDTNISTVATTDGVQVKLNPNLDLGATGSVKTGNTTINNAGVTADQVTVGGVVINNTSGINAGGKAITNVAAPTNNTDAANKKYVDDAGTALTNLGFGLKAQDGTTVNKKLGEAVEVVGADSNITTKVAGGQVAIELNKNLNNLTGITVNDGTNGTNGSTVIGKDGISVKDGSGNTIAGVDNTALTVKDGSGNTETSINQAINTLNAAQGETDKFAVKYDKNADGSVNYNNITLAGTTASSTQDATTGKITTTGGTSLNNVASAGDYKDVANASKGVNAGDLNNAVVDATNAATSKGFALQAADGAKVQKNLGEAVEVVGADSNITTKVAGGQVAIELNKNLNNLTGITVNDGTNGTNGSTVIGKDGISVKDGSGNTIAGVDNTALTVKDGSGNTETSINQAINTLNAAQGETDKFAVKYDKNTDGSTNYNSITAGNGNGTAATIGTDTAGNSVVTSGGTKISNVANGVNASDAVNKGQLDSLSTGLTNTGFGLKAADGNTVNKKLGEAVDVVGADSNITTKVAGGQVAIELNKNLNNLTGITVNDGTNGTNGSTVIGKDGISIKDGSGNTIAGVDNTALTVKDGSGNTETSINQAINTLNAAQGETDKFAVKYDKNADGSANYNNITLAGTTASSTQDATTGKITTTGGTSLNNVASAGDYKDVANASKGVNAGDLNNAVVDATNAATSKGFALQAADGAKVQKNLGEAVEVVGADSNITTKVVGGQVAIELNKNLNNLTGITVNDGTNGTNGSTVIGKDGISVKDGSGNTIAGVDNTALTVKDGSGNTETSINQAINTLNAAQGETDKFAVKYDKNADGSVNYNNITLAGTTASSTQDATTGKITTTGGTSLNNVASAGDYKDVANASKGVNAGDLNNAVVDATNAATSKGFALQAADGAKVQKNLGEAVEVVGADSNITTKVAGGQVAIELNKNLNNLTGITVNDGTNGTNGSTVIGKDGISVKDGSGNTIAGVDNTALTVKDGSGNTETSINQAINTLNAAQGETDKFAVKYDKNADGSVNYNNITLAGTTASSTQDATTGKITTTGGTSLNNVASAGDYKDVANASKGVNAGDLNNAVVDATNAATSKGFALQAADGAKVQKNLGEAVEVVGADSNITTKVAGGQVAIELNKNLNNLTGITVNDGTNGTNGSTVIGKDGISVKDGSGNTIAGVDNTALTVKDGSGNTETSINQAINTLNAAQGETDKFAVKYDKNADGSANYNNVTLAGTNGTIISNVKAGAVTSTSTDAINGSQLYGVANSVKNAIGGSTTIDATTGAITTTNIGGTGSNTIDGAISSIKDSATKAKTTVSAGDNVVVTSGTNADGSTNYEVATAKDVNFDKVTVGSVVVDKSSNTIKGLSNTTWNGTAVSGQAATEDQLKTVSDAQGETDKFAVKYDKNADGSANYNSITAGNGNGTAATIGTDTAGNSVVTSGGTKISNVANGVNASDAVNKGQLDSLSTGLTNTGFGLKAADGNTVNKKLGEAVDVVGADSNITTKVAGGQVAIELNKNLNNLTGITVNDGTNGTNGSTVIGKDGISIKDGSGNTIAGVDNTALTVKDSSGNTETSINQAINTLNAAQGETDKFAVKYDKNADGSVNYNNVTLAGTNGTIIRNVKAGAVTSTSTDAINGSQLYDIANSVKNAIGGSTTRDVTTGAITTTNIGGTGSNTIDGAISSIKDSATKAKTTISAGDNVVVTSGTNADGSTNYEVATAKDVNFDKVTVGNVVVDKANDTIQGLSNKDLNSTDFATKGRAATEEQLKAVITSNITEVVDGNGNKVNIIDQVVNTKPDNKNQDSLFLTYDKQGQETTDRLTIGQTVQKMNTDGIKFFHTNADTSKGDLGTTNDSSAGGLNSTAIGVNAIVANGADSSVALGHNTKVNGKQSIAIGSGAEALGNQSISIGTGNKVTGDHSGAIGDPTIVNGANSYSVGNNNQVLTDDTFVLGNNVTKTIAGSVVLGNGSAATTGAGEAGYALSVATNADKAAITKTTSSTGAVAVGDASSGIYRQITGVAAGSVDSDAVNVAQLKAVGNQVVTTQTTLVNSLGGNAKVNADGTITGPTYNVAQGNQTNVGDALTALDNAINTAATTSKSTVSNGQNIVVSKSKNADGSDNYEVSTAKDLTVDSVKAGDTVLNNAGITIGNNAVVLNNTGLTISGGPSVTLAGIDAGNKTIQNVANAVNATDAVNKGQLDSAINNVNNNVNELANNAVKYDDASKDKITLGGGATGTTITNVKDGTVAQGSKDAVNGGQLWNVQQQVDQNTTDISNIKNDINNGTVGLVQQAGKDAPVTVAKDTGGTTVNVAGTDGNRVVTGVKEGAVNATSKDAVNGSQLNTTNQAVVNYLGGGAGYDNITGSFTAPSYTVGDSKYNNVGGAIDALNQADQALNSKIDNVSNKLDNAFRITNNRIDDVEKKANAGIAAAMALESAPYVPGKYTYAAGAAYHGGENAVGVTLRKTADNGRWSITGGVAAASQGDASVRIGISGVID.

Positions 1–23 (MNKIYKVIWNATLLAWVAVSELA) are cleaved as a signal peptide. Residues 24–3487 (KGKTKSTTSK…TNQAVVNYLG (3464 aa)) form a surface exposed passenger domain region. The N-terminal YadA-like head stretch occupies residues 108–315 (SIAIGENAQG…ASDAVTVAQL (208 aa)). The interval 316–2904 (DKAYDDTNGR…GRAATEEQLK (2589 aa)) is N-terminal stalk. The segment at 2905-3169 (AVITSNITEV…DSDAVNVAQL (265 aa)) is C-terminal YadA-like head. The segment at 3170-3561 (KAVGNQVVTT…DVEKKANAGI (392 aa)) is C-terminal stalk. The interval 3539–3574 (LDNAFRITNNRIDDVEKKANAGIAAAMALESAPYVP) is outer membrane translocation of the passenger domain. Transmembrane regions (beta stranded) follow at residues 3575 to 3585 (GKYTYAAGAAY), 3589 to 3599 (ENAVGVTLRKT), 3608 to 3614 (TGGVAAA), and 3618 to 3629 (DASVRIGISGVI). A translocator domain region spans residues 3575-3630 (GKYTYAAGAAYHGGENAVGVTLRKTADNGRWSITGGVAAASQGDASVRIGISGVID).

Belongs to the autotransporter-2 (AT-2) (TC 1.B.40) family. As to quaternary structure, homotrimer. Interacts with TpgA.

It localises to the cell surface. Its subcellular location is the cell outer membrane. Functionally, responsible for autoagglutination, and for adhesion to abiotic and biotic surfaces such as polystyrene (PS), type I collagen, polypropylene (PP), polyvinylchloride (PVC), glass and stainless steel (SS). Adhesion is much stronger than that mediated by Yersinia YadA in a comparative assay. Confers autoagglutination and binding to PS, type I collagen, PP, PVC, glass and SS upon expression in Acinetobacter baylyi strain ADP1. Involved in rapid, irreversible adherence to polyurethane. Forms an unusual biofilm. An extended, surface exposed fiber binds to quartz crystals, PS and glass. It can be removed by washing in distilled water. The protein is Trimeric autotransporter adhesin AtaA of Acinetobacter sp. (strain Tol 5).